The following is a 906-amino-acid chain: Protein translocase subunit SecA (906 aa).

ATP-binding positions include Q86, 104-108 (GEGKT), and D511. Composition is skewed to basic and acidic residues over residues 853–865 (HESV…RHDE) and 877–888 (VRREGPKVKRND). The disordered stretch occupies residues 853-906 (HESVIDNNQRHDEDEQEEAPKVQQVRREGPKVKRNDPCPCGSGKKYKQCHGKVE). The Zn(2+) site is built by C890, C892, C901, and H902. Over residues 896-906 (KKYKQCHGKVE) the composition is skewed to basic residues.

Belongs to the SecA family. Monomer and homodimer. Part of the essential Sec protein translocation apparatus which comprises SecA, SecYEG and auxiliary proteins SecDF-YajC and YidC. Requires Zn(2+) as cofactor.

Its subcellular location is the cell inner membrane. The protein resides in the cytoplasm. It carries out the reaction ATP + H2O + cellular proteinSide 1 = ADP + phosphate + cellular proteinSide 2.. Part of the Sec protein translocase complex. Interacts with the SecYEG preprotein conducting channel. Has a central role in coupling the hydrolysis of ATP to the transfer of proteins into and across the cell membrane, serving both as a receptor for the preprotein-SecB complex and as an ATP-driven molecular motor driving the stepwise translocation of polypeptide chains across the membrane. The sequence is that of Protein translocase subunit SecA from Francisella tularensis subsp. holarctica (strain FTNF002-00 / FTA).